The primary structure comprises 231 residues: UPF0758 protein YsxA (231 aa).

Positions 109–231 (VIRSPEDGAN…FVSLKEKGYL (123 aa)) constitute an MPN domain. Zn(2+) contacts are provided by His-180, His-182, and Asp-193. Positions 180-193 (HNHPSGDPTPSRED) match the JAMM motif motif.

Belongs to the UPF0758 family.

The protein is UPF0758 protein YsxA (ysxA) of Bacillus subtilis (strain 168).